A 507-amino-acid polypeptide reads, in one-letter code: Hippocampus abundant transcript-like protein 1 (507 aa).

The interval 1–22 (MSTDGESPEEPGWKAVASPKAS) is disordered. Residues 1 to 51 (MSTDGESPEEPGWKAVASPKASAMPEKRGSAQAASSSWLQGFGQPSVYHAA) are Extracellular-facing. A helical transmembrane segment spans residues 52-72 (FVIFFEFFAWGLLTTPMLTVL). Residues 73–84 (HETFPQHTFLMN) are Cytoplasmic-facing. A helical membrane pass occupies residues 85-105 (GLIQGVKGLLSFLSAPLIGAL). Residues 106 to 113 (SDVWGRKP) are Extracellular-facing. The helical transmembrane segment at 114–134 (FLLGTVFFTCFPIPLMRISPW) threads the bilayer. The Cytoplasmic portion of the chain corresponds to 135–136 (WY). The helical transmembrane segment at 137–157 (FGMISVSGVFSVTFSVIFAYV) threads the bilayer. The Extracellular portion of the chain corresponds to 158–170 (ADFTQEHERSTAY). A helical membrane pass occupies residues 171–191 (GWVSATFAASLVSSPAIGTYL). The Cytoplasmic segment spans residues 192-198 (SSNYGDS). The helical transmembrane segment at 199 to 219 (LVVLVATVVALLDICFILVAV) threads the bilayer. Residues 220-257 (PESLPEKIRPASWGAQISWKQADPFASLKKVGKDSTVL) are Extracellular-facing. The helical transmembrane segment at 258–278 (LICITVFLSYLPEAGQYSSFF) threads the bilayer. At 279 to 283 (LYLRQ) the chain is on the cytoplasmic side. The chain crosses the membrane as a helical span at residues 284-304 (VIGFGSVKIVAFIAMVGILSI). Residues 305–323 (LAQTVFLSKLMRSLGNKNT) lie on the Extracellular side of the membrane. The chain crosses the membrane as a helical span at residues 324 to 344 (VLLGLGFQILQLAWYGFGAQA). The Cytoplasmic segment spans residues 345-347 (WMM). Residues 348-368 (WAAGTVAAMSSITFPAVSALI) traverse the membrane as a helical segment. Over 369–389 (SRNAESDQQGVAQGIITGIRG) the chain is Extracellular. Residues 390–410 (LCNGLGPALYGFIFYLFHVEL) traverse the membrane as a helical segment. Over 411-430 (NELGPKLDSDNDPLQGAFIP) the chain is Cytoplasmic. Residues 431-451 (GPPFLFGACIVLMSFLVALFI) traverse the membrane as a helical segment. The Extracellular portion of the chain corresponds to 452–507 (PEYRKTGGVQKHNNSISGSLSTPPERGSDEDIEPLLQDSNIWELSSEEPGNQCTEL). Over residues 462 to 473 (KHNNSISGSLST) the composition is skewed to polar residues. Positions 462–483 (KHNNSISGSLSTPPERGSDEDI) are disordered. N-linked (GlcNAc...) asparagine glycosylation is present at N464.

It belongs to the major facilitator superfamily.

It is found in the membrane. This chain is Hippocampus abundant transcript-like protein 1, found in Rattus norvegicus (Rat).